Consider the following 65-residue polypeptide: Large ribosomal subunit protein bL35 (65 aa).

This sequence belongs to the bacterial ribosomal protein bL35 family.

This Psychrobacter arcticus (strain DSM 17307 / VKM B-2377 / 273-4) protein is Large ribosomal subunit protein bL35.